The sequence spans 444 residues: UDP-N-acetylmuramate--L-alanine ligase (444 aa).

110 to 116 (GAHGKTS) contributes to the ATP binding site.

This sequence belongs to the MurCDEF family.

It is found in the cytoplasm. It carries out the reaction UDP-N-acetyl-alpha-D-muramate + L-alanine + ATP = UDP-N-acetyl-alpha-D-muramoyl-L-alanine + ADP + phosphate + H(+). It participates in cell wall biogenesis; peptidoglycan biosynthesis. In terms of biological role, cell wall formation. This Streptococcus pneumoniae (strain P1031) protein is UDP-N-acetylmuramate--L-alanine ligase.